The chain runs to 81 residues: Large ribosomal subunit protein bL31 (81 aa).

The Zn(2+) site is built by cysteine 16, cysteine 18, cysteine 38, and cysteine 41.

It belongs to the bacterial ribosomal protein bL31 family. Type A subfamily. Part of the 50S ribosomal subunit. The cofactor is Zn(2+).

Its function is as follows. Binds the 23S rRNA. The protein is Large ribosomal subunit protein bL31 of Mycobacterium marinum (strain ATCC BAA-535 / M).